The chain runs to 86 residues: Cell division topological specificity factor (86 aa).

Belongs to the MinE family.

In terms of biological role, prevents the cell division inhibition by proteins MinC and MinD at internal division sites while permitting inhibition at polar sites. This ensures cell division at the proper site by restricting the formation of a division septum at the midpoint of the long axis of the cell. The sequence is that of Cell division topological specificity factor from Rhizobium rhizogenes (strain K84 / ATCC BAA-868) (Agrobacterium radiobacter).